A 359-amino-acid chain; its full sequence is Gene 58 protein (359 aa).

11 helical membrane-spanning segments follow: residues 12 to 32, 45 to 65, 75 to 95, 103 to 123, 132 to 152, 154 to 174, 220 to 240, 246 to 266, 271 to 289, 296 to 318, and 330 to 350; these read TMAAFGTGMLGAASFVWCFLF, VDELFFWGSLCVQVMMLFFCF, YLDLICAVNIVALFGCLICLQ, YLPILFSLNLIWLSVWLPVTF, YANAYFQLGFFTATTVHYLLL, FGSVTTSFLFIPFACFLIAGL, LCVVAVMTVGFAVFMTAAGVY, VLKTYLLMFQFGTFCVGGMGY, ATFVYCMTACILMPLVFVL, SVLFLAIFFLFINGVTCETTIML, and IVLSVCLLVNICITLSLNVLY.

Belongs to the herpesviridae BMRF2 family.

It is found in the host membrane. The sequence is that of Gene 58 protein (58) from Equine herpesvirus 2 (strain 86/87) (EHV-2).